A 210-amino-acid polypeptide reads, in one-letter code: Cell division protein SepF (210 aa).

It belongs to the SepF family. In terms of assembly, homodimer. Interacts with FtsZ.

It is found in the cytoplasm. Its function is as follows. Cell division protein that is part of the divisome complex and is recruited early to the Z-ring. Probably stimulates Z-ring formation, perhaps through the cross-linking of FtsZ protofilaments. Its function overlaps with FtsA. The chain is Cell division protein SepF from Mycobacterium leprae (strain Br4923).